Reading from the N-terminus, the 381-residue chain is Putative 8-amino-7-oxononanoate synthase (381 aa).

Residue Arg-20 participates in substrate binding. Residue 107 to 108 (GY) coordinates pyridoxal 5'-phosphate. Substrate is bound at residue His-132. Pyridoxal 5'-phosphate is bound by residues Ser-180, 205-208 (DEAH), and 236-239 (TLSK). At Lys-239 the chain carries N6-(pyridoxal phosphate)lysine. Thr-351 contacts substrate.

Belongs to the class-II pyridoxal-phosphate-dependent aminotransferase family. BioF subfamily. As to quaternary structure, homodimer. The cofactor is pyridoxal 5'-phosphate.

It carries out the reaction 6-carboxyhexanoyl-[ACP] + L-alanine + H(+) = (8S)-8-amino-7-oxononanoate + holo-[ACP] + CO2. Its pathway is cofactor biosynthesis; biotin biosynthesis. Catalyzes the decarboxylative condensation of pimeloyl-[acyl-carrier protein] and L-alanine to produce 8-amino-7-oxononanoate (AON), [acyl-carrier protein], and carbon dioxide. This is Putative 8-amino-7-oxononanoate synthase (bioF) from Rippkaea orientalis (strain PCC 8801 / RF-1) (Cyanothece sp. (strain PCC 8801)).